Consider the following 396-residue polypeptide: MKGALLTAAMLLGSAQAGVHTMKLKKVPLAEQLESVPIDVQVQHLGQKYTGLRTESHTQAMFKATDAQVSGNHPVPITNFMNAQYFSEITIGTPPQTFKVVLDTGSSNLWVPSSQCGSIACYLHNKYESSESSTYKKNGTSFKIEYGSGSLSGFVSQDRMTIGDITINDQLFAEATSEPGLAFAFGRFDGILGLGYDRIAVNGITPPFYKMVEQKLVDEPVFSFYLADQDGESEVVFGGVNKDRYTGKITTIPLRRKAYWEVDFDAIGYGKDFAELEGHGVILDTGTSLIALPSQLAEMLNAQIGAKKSWNGQFTIDCGKKSSLEDVTFTLAGYNFTLGPEDYILEASGSCLSTFMGMDMPAPVGPLAILGDAFLRKYYSIYDLGADTVGIATAKR.

The N-terminal stretch at 1–17 is a signal peptide; that stretch reads MKGALLTAAMLLGSAQA. A propeptide spans 18–70 (activation peptide); the sequence is GVHTMKLKKVPLAEQLESVPIDVQVQHLGQKYTGLRTESHTQAMFKATDAQVS. A Peptidase A1 domain is found at 85–392; that stretch reads YFSEITIGTP…DLGADTVGIA (308 aa). The active site involves Asp103. A disulfide bridge links Cys116 with Cys121. An N-linked (GlcNAc...) asparagine glycan is attached at Asn138. The active site involves Asp284. A disulfide bond links Cys318 and Cys351. A glycan (N-linked (GlcNAc...) asparagine) is linked at Asn335.

Belongs to the peptidase A1 family.

The protein localises to the vacuole. This chain is Vacuolar protease A (pep-4), found in Neurospora crassa (strain ATCC 24698 / 74-OR23-1A / CBS 708.71 / DSM 1257 / FGSC 987).